A 64-amino-acid polypeptide reads, in one-letter code: Large ribosomal subunit protein bL35c (64 aa).

This sequence belongs to the bacterial ribosomal protein bL35 family.

It localises to the plastid. It is found in the chloroplast. This is Large ribosomal subunit protein bL35c from Phaeodactylum tricornutum (strain CCAP 1055/1).